The sequence spans 141 residues: Alpha-lactalbumin (141 aa).

The N-terminal stretch at 1–19 is a signal peptide; it reads MMSFVSLLVVGILFPAIQA. The region spanning 20-141 is the C-type lysozyme domain; that stretch reads KQFTKCELSQ…KLDQWLCEKM (122 aa). 4 disulfide bridges follow: Cys25-Cys138, Cys47-Cys129, Cys80-Cys95, and Cys91-Cys109. Ca(2+) contacts are provided by Lys97, Asp100, Asp102, Asp105, and Asp106.

Belongs to the glycosyl hydrolase 22 family. As to quaternary structure, lactose synthase (LS) is a heterodimer of a catalytic component, beta1,4-galactosyltransferase (beta4Gal-T1) and a regulatory component, alpha-lactalbumin (LA). As to expression, mammary gland specific. Secreted in milk.

The protein localises to the secreted. Its function is as follows. Regulatory subunit of lactose synthase, changes the substrate specificity of galactosyltransferase in the mammary gland making glucose a good acceptor substrate for this enzyme. This enables LS to synthesize lactose, the major carbohydrate component of milk. In other tissues, galactosyltransferase transfers galactose onto the N-acetylglucosamine of the oligosaccharide chains in glycoproteins. This chain is Alpha-lactalbumin (LALBA), found in Sus scrofa (Pig).